The chain runs to 154 residues: Protein X (154 aa).

The interval 68–117 (PCALRFTSARRMETTVNAPQSLPTPLHKRTLGLSPRSTTWIEEYIKDCVF) is mitochondrial targeting sequence.

Belongs to the orthohepadnavirus protein X family. May form homodimer. May interact with host CEBPA, CFLAR, CREB1, DDB1, E4F1, HBXIP, HSPD1/HSP60, NFKBIA, POLR2E and SMAD4. Interacts with host SMC5-SMC6 complex and induces its degradation. Interacts with host TRPC4AP; leading to prevent ubiquitination of TRPC4AP. Interacts with host PLSCR1; this interaction promotes ubiquitination and degradation of HBx and impairs HBx-mediated cell proliferation. A fraction may be phosphorylated in insect cells and HepG2 cells, a human hepatoblastoma cell line. Phosphorylated in vitro by host protein kinase C or mitogen-activated protein kinase. N-acetylated in insect cells.

Its subcellular location is the host cytoplasm. It is found in the host nucleus. The protein localises to the host mitochondrion. Multifunctional protein that plays a role in silencing host antiviral defenses and promoting viral transcription. Does not seem to be essential for HBV infection. May be directly involved in development of cirrhosis and liver cancer (hepatocellular carcinoma). Most of cytosolic activities involve modulation of cytosolic calcium. The effect on apoptosis is controversial depending on the cell types in which the studies have been conducted. May induce apoptosis by localizing in mitochondria and causing loss of mitochondrial membrane potential. May also modulate apoptosis by binding host CFLAR, a key regulator of the death-inducing signaling complex (DISC). Promotes viral transcription by using the host E3 ubiquitin ligase DDB1 to target the SMC5-SMC6 complex to proteasomal degradation. This host complex would otherwise bind to viral episomal DNA, and prevents its transcription. Moderately stimulates transcription of many different viral and cellular transcription elements. Promoters and enhancers stimulated by HBx contain DNA binding sites for NF-kappa-B, AP-1, AP-2, c-EBP, ATF/CREB, or the calcium-activated factor NF-AT. This Homo sapiens (Human) protein is Protein X.